The sequence spans 199 residues: Adenosylcobinamide-GDP ribazoletransferase (199 aa).

The next 2 membrane-spanning stretches (helical) occupy residues 2-22 and 61-81; these read LAGGVPHGTVAFAYLAVVFAV and IAAVVVVVAGLVTGSLGVAAL.

The protein belongs to the CobS family. It depends on Mg(2+) as a cofactor.

The protein localises to the cell membrane. The catalysed reaction is alpha-ribazole + adenosylcob(III)inamide-GDP = adenosylcob(III)alamin + GMP + H(+). It carries out the reaction alpha-ribazole 5'-phosphate + adenosylcob(III)inamide-GDP = adenosylcob(III)alamin 5'-phosphate + GMP + H(+). Its pathway is cofactor biosynthesis; adenosylcobalamin biosynthesis; adenosylcobalamin from cob(II)yrinate a,c-diamide: step 7/7. Joins adenosylcobinamide-GDP and alpha-ribazole to generate adenosylcobalamin (Ado-cobalamin). Also synthesizes adenosylcobalamin 5'-phosphate from adenosylcobinamide-GDP and alpha-ribazole 5'-phosphate. In Halobacterium salinarum (strain ATCC 700922 / JCM 11081 / NRC-1) (Halobacterium halobium), this protein is Adenosylcobinamide-GDP ribazoletransferase.